Consider the following 190-residue polypeptide: Ribose 1,5-bisphosphate phosphokinase PhnN (190 aa).

Position 10 to 17 (10 to 17 (GPSGSGKD)) interacts with ATP.

This sequence belongs to the ribose 1,5-bisphosphokinase family.

It carries out the reaction alpha-D-ribose 1,5-bisphosphate + ATP = 5-phospho-alpha-D-ribose 1-diphosphate + ADP. The protein operates within metabolic intermediate biosynthesis; 5-phospho-alpha-D-ribose 1-diphosphate biosynthesis; 5-phospho-alpha-D-ribose 1-diphosphate from D-ribose 5-phosphate (route II): step 3/3. In terms of biological role, catalyzes the phosphorylation of ribose 1,5-bisphosphate to 5-phospho-D-ribosyl alpha-1-diphosphate (PRPP). In Pseudomonas fluorescens (strain SBW25), this protein is Ribose 1,5-bisphosphate phosphokinase PhnN.